A 650-amino-acid polypeptide reads, in one-letter code: Phosphatidylinositol 4-kinase gamma 7 (650 aa).

A Ubiquitin-like; degenerate domain is found at 46 to 103 (RRVFVQTETGCVLGMELDRSDNVHTVKRRLQIALNFPTEESSLTYGDMVLTNDLSAVR). In terms of domain architecture, PI3K/PI4K catalytic spans 166 to 463 (GVEPLPVHSG…SVTERDVFSP (298 aa)). Positions 172–178 (VHSGLGG) are G-loop. Residues 173 to 179 (HSGLGGA), Lys194, and 283 to 286 (QKFV) each bind ATP. The segment at 316–324 (FNTDRHGGN) is catalytic loop. The activation loop stretch occupies residues 343 to 369 (PIDHGLCLPETLEDPYFEWIHWPQASL). Asp345 is a binding site for ATP. 2 disordered regions span residues 508 to 534 (SLGK…ENTV) and 560 to 595 (STSM…KSAN). A compositionally biased stretch (acidic residues) spans 516 to 529 (IKEEEEDEEEEEDK). Polar residues-rich tracts occupy residues 560 to 569 (STSMKNTHLS) and 585 to 595 (ENTSSGHKSAN). The residue at position 593 (Ser593) is a Phosphoserine.

Belongs to the PI3/PI4-kinase family. Type II PI4K subfamily.

It carries out the reaction a 1,2-diacyl-sn-glycero-3-phospho-(1D-myo-inositol) + ATP = a 1,2-diacyl-sn-glycero-3-phospho-(1D-myo-inositol 4-phosphate) + ADP + H(+). Functionally, the phosphorylation of phosphatidylinositol (PI) to PI4P is the first committed step in the generation of phosphatidylinositol 4,5-bisphosphate (PIP2), a precursor of the second messenger inositol 1,4,5-trisphosphate (InsP3). Undergoes autophosphorylation and phosphorylates serine/threonine residues of protein substrates. The polypeptide is Phosphatidylinositol 4-kinase gamma 7 (Arabidopsis thaliana (Mouse-ear cress)).